The following is a 225-amino-acid chain: ATP-dependent Clp protease proteolytic subunit (225 aa).

The active-site Nucleophile is the Ser101. His126 is a catalytic residue.

Belongs to the peptidase S14 family. As to quaternary structure, component of the chloroplastic Clp protease core complex.

The protein localises to the plastid. The protein resides in the chloroplast stroma. The enzyme catalyses Hydrolysis of proteins to small peptides in the presence of ATP and magnesium. alpha-casein is the usual test substrate. In the absence of ATP, only oligopeptides shorter than five residues are hydrolyzed (such as succinyl-Leu-Tyr-|-NHMec, and Leu-Tyr-Leu-|-Tyr-Trp, in which cleavage of the -Tyr-|-Leu- and -Tyr-|-Trp bonds also occurs).. Cleaves peptides in various proteins in a process that requires ATP hydrolysis. Has a chymotrypsin-like activity. Plays a major role in the degradation of misfolded proteins. The protein is ATP-dependent Clp protease proteolytic subunit of Chlorokybus atmophyticus (Soil alga).